The primary structure comprises 228 residues: Translin (228 aa).

A DNA/RNA binding region spans residues 86–90 (RFHEH). The leucine-zipper stretch occupies residues 177–198 (LDSGFRLLNLKNDSLRKRYDGL). Lysine 187 carries the N6-acetyllysine modification. Residue serine 190 is modified to Phosphoserine. Residue lysine 199 is modified to N6-acetyllysine.

This sequence belongs to the translin family. In terms of assembly, ring-shaped heterooctamer of six TSN and two TSNAX subunits, DNA/RNA binding occurs inside the ring.

Its subcellular location is the cytoplasm. It localises to the nucleus. DNA-binding protein that specifically recognizes consensus sequences at the breakpoint junctions in chromosomal translocations, mostly involving immunoglobulin (Ig)/T-cell receptor gene segments. Seems to recognize single-stranded DNA ends generated by staggered breaks occurring at recombination hot spots. In terms of biological role, exhibits both single-stranded and double-stranded endoribonuclease activity. May act as an activator of RNA-induced silencing complex (RISC) by facilitating endonucleolytic cleavage of the siRNA passenger strand. The protein is Translin (TSN) of Pongo abelii (Sumatran orangutan).